Consider the following 79-residue polypeptide: UPF0291 protein BH2353 (79 aa).

A disordered region spans residues 57-79; the sequence is GAGNDVTPDKLKQSKNKYRNDIH. Residues 63–79 show a composition bias toward basic and acidic residues; it reads TPDKLKQSKNKYRNDIH.

Belongs to the UPF0291 family.

The protein resides in the cytoplasm. This chain is UPF0291 protein BH2353, found in Halalkalibacterium halodurans (strain ATCC BAA-125 / DSM 18197 / FERM 7344 / JCM 9153 / C-125) (Bacillus halodurans).